A 767-amino-acid polypeptide reads, in one-letter code: Pyrin (767 aa).

The Pyrin domain maps to 1-92 (MAKTLGDHLL…AEELRKATGT (92 aa)). The interval 94–219 (HLIEENRVGG…LQGLYNNAPG (126 aa)) is disordered. Composition is skewed to polar residues over residues 126 to 142 (GTQQ…SSQA), 165 to 176 (LDSQTKPWTRST), and 183 to 208 (TQGT…SSAG). S241 bears the Phosphoserine mark. The disordered stretch occupies residues 311-346 (TSLIGEERCPTSWTENGNGSPETTESSGETAGSILS). Residues 321 to 340 (TSWTENGNGSPETTESSGET) are compositionally biased toward polar residues. The B box-type zinc finger occupies 439–481 (QSLPQCPRHMKQVLLLFCEDHREPICLICRLSLEHQGHRVRPI). Positions 444, 447, 467, and 473 each coordinate Zn(2+). A coiled-coil region spans residues 481 to 510 (IEEAALEYKEQIREQLERLREMRGYVEEHR). A required for homotrimerization and induction of pyroptosomes region spans residues 489 to 647 (KEQIREQLER…CFSEMLSSEM (159 aa)). Residues 697-719 (GGSEPKDYLHPQPAQDTPELHEI) form a disordered region.

Homotrimer. Interacts (via the B box-type zinc finger) with PSTPIP1. Interacts (via the B30.2/SPRY domain) with several components of the inflammasome complex, including CASP1 p20 and p10 subunits, CASP5, PYCARD, NLRP1, NLRP2 and NLRP3, as well as with unprocessed IL1B; this interaction may lead to autophagic degradation of these proteins. Component of the AIM2 PANoptosome complex, a multiprotein complex that drives inflammatory cell death (PANoptosis). Interacts with NFKBIA and RELA. Interacts weakly with VASP and ACTR3. Interacts with active ULK1 (phosphorylated on 'Ser-317') and BECN1 simultaneously. Also interacts with ATG16L1 (via WD repeats), and with ATG8 family members, including GABARAP, GABARAPL1 and, to a lesser extent, GABARAPL2, MAP1LC3A/LC3A and MAP1LC3C/LC3C. Interacts with TRIM21. Interacts with YWHAB, YWHAE, YWHAG, YWHAH, YWHAQ and YWHAZ; the interaction is required for the down-regulation of pyrin pro-inflammatory activity. Post-translationally, phosphorylation at Ser-241 is required for the interaction with 14-3-3 proteins and down-regulation of pyrin pro-inflammatory activity. In terms of processing, degraded along with the delivery of its substrates to autolysosomal compartments (at protein level). As to expression, expressed in spleen peripheral blood granulocytes. Not expressed in lymphocytes, thymus, testis, ovary, heart, brain, lung, liver, kidney and muscle.

Its subcellular location is the cytoplasm. It localises to the cytoskeleton. The protein resides in the cell projection. It is found in the ruffle. The protein localises to the lamellipodium. Its subcellular location is the cytoplasmic vesicle. It localises to the autophagosome. The protein resides in the nucleus. Functionally, involved in the regulation of innate immunity and the inflammatory response in response to IFNG/IFN-gamma. Organizes autophagic machinery by serving as a platform for the assembly of ULK1, Beclin 1/BECN1, ATG16L1, and ATG8 family members and recognizes specific autophagy targets, thus coordinating target recognition with assembly of the autophagic apparatus and initiation of autophagy. Acts as an autophagy receptor for the degradation of several inflammasome components, including CASP1, NLRP1 and NLRP3, hence preventing excessive IL1B- and IL18-mediated inflammation. However, it can also have a positive effect in the inflammatory pathway, acting as an innate immune sensor that triggers PYCARD/ASC specks formation, caspase-1 activation, and IL1B and IL18 production. Together with AIM2, also acts as a mediator of pyroptosis, necroptosis and apoptosis (PANoptosis), an integral part of host defense against pathogens, in response to bacterial infection. It is required for PSTPIP1-induced PYCARD/ASC oligomerization and inflammasome formation. Recruits PSTPIP1 to inflammasomes, and is required for PSTPIP1 oligomerization. This Mus musculus (Mouse) protein is Pyrin.